Here is a 334-residue protein sequence, read N- to C-terminus: Holliday junction branch migration complex subunit RuvB (334 aa).

Residues 4-184 (ADRLIQPQLQ…FGIPLRLEFY (181 aa)) form a large ATPase domain (RuvB-L) region. ATP is bound by residues Arg-24, Gly-65, Lys-68, Thr-69, Thr-70, 131–133 (EDY), Arg-174, Tyr-184, and Arg-221. Residue Thr-69 participates in Mg(2+) binding. A small ATPAse domain (RuvB-S) region spans residues 185–255 (NIKDLSTIVT…VADHALDLLD (71 aa)). The segment at 258 to 334 (NEGFDYMDRK…YQHFQLIKPE (77 aa)) is head domain (RuvB-H). 3 residues coordinate DNA: Arg-294, Arg-313, and Arg-318.

It belongs to the RuvB family. Homohexamer. Forms an RuvA(8)-RuvB(12)-Holliday junction (HJ) complex. HJ DNA is sandwiched between 2 RuvA tetramers; dsDNA enters through RuvA and exits via RuvB. An RuvB hexamer assembles on each DNA strand where it exits the tetramer. Each RuvB hexamer is contacted by two RuvA subunits (via domain III) on 2 adjacent RuvB subunits; this complex drives branch migration. In the full resolvosome a probable DNA-RuvA(4)-RuvB(12)-RuvC(2) complex forms which resolves the HJ.

The protein localises to the cytoplasm. The enzyme catalyses ATP + H2O = ADP + phosphate + H(+). The RuvA-RuvB-RuvC complex processes Holliday junction (HJ) DNA during genetic recombination and DNA repair, while the RuvA-RuvB complex plays an important role in the rescue of blocked DNA replication forks via replication fork reversal (RFR). RuvA specifically binds to HJ cruciform DNA, conferring on it an open structure. The RuvB hexamer acts as an ATP-dependent pump, pulling dsDNA into and through the RuvAB complex. RuvB forms 2 homohexamers on either side of HJ DNA bound by 1 or 2 RuvA tetramers; 4 subunits per hexamer contact DNA at a time. Coordinated motions by a converter formed by DNA-disengaged RuvB subunits stimulates ATP hydrolysis and nucleotide exchange. Immobilization of the converter enables RuvB to convert the ATP-contained energy into a lever motion, pulling 2 nucleotides of DNA out of the RuvA tetramer per ATP hydrolyzed, thus driving DNA branch migration. The RuvB motors rotate together with the DNA substrate, which together with the progressing nucleotide cycle form the mechanistic basis for DNA recombination by continuous HJ branch migration. Branch migration allows RuvC to scan DNA until it finds its consensus sequence, where it cleaves and resolves cruciform DNA. The chain is Holliday junction branch migration complex subunit RuvB from Shewanella putrefaciens (strain CN-32 / ATCC BAA-453).